Consider the following 357-residue polypeptide: MLDKLAFLEEKYEDLSEKISEPEIINDQPQWKKLVKEHSDLEEIVMKYREYKKTEQGLNDAKEILRDKTADEEFREMAKMEIAELEEKIEVLEGELKILLLPKDPNDDKDVIVEIRAGAGGDEAGLFAADLFRMYTRYAENVGWKVEMMSANDTGIGGYKEVIFMIKGHGAYSRLKYESGVHRVQRIPSTESGGRIHTSTITVAVLPEADDVDFELDMNDIRVDVFRSSGNGGQSVNTTDSAVRVTHIPTGTVVSCQDEKSQLKNKEKALKILRARLLDVLIQEQQAEIAQDRKSQVGTGDRSERIRTYNFPQGRITDHRINVTLYRLDSFLNGDIQEMIDALITTDQAEKLKEVNS.

Position 234 is an N5-methylglutamine (Q234).

This sequence belongs to the prokaryotic/mitochondrial release factor family. Methylated by PrmC. Methylation increases the termination efficiency of RF1.

The protein localises to the cytoplasm. Functionally, peptide chain release factor 1 directs the termination of translation in response to the peptide chain termination codons UAG and UAA. This Alkaliphilus oremlandii (strain OhILAs) (Clostridium oremlandii (strain OhILAs)) protein is Peptide chain release factor 1.